The following is a 308-amino-acid chain: Homoserine kinase (308 aa).

85–95 provides a ligand contact to ATP; it reads PLTRGLGSSAA.

This sequence belongs to the GHMP kinase family. Homoserine kinase subfamily.

It is found in the cytoplasm. It catalyses the reaction L-homoserine + ATP = O-phospho-L-homoserine + ADP + H(+). Its pathway is amino-acid biosynthesis; L-threonine biosynthesis; L-threonine from L-aspartate: step 4/5. Functionally, catalyzes the ATP-dependent phosphorylation of L-homoserine to L-homoserine phosphate. This is Homoserine kinase from Caldicellulosiruptor saccharolyticus (strain ATCC 43494 / DSM 8903 / Tp8T 6331).